A 934-amino-acid chain; its full sequence is uncharacterized protein (934 aa).

The signal sequence occupies residues 1-24 (MKLKKRYLLLGSTLTVSAALILSA). Cysteine 25 carries N-palmitoyl cysteine lipidation. A lipid anchor (S-diacylglycerol cysteine) is attached at cysteine 25. The interval 111-131 (SGLKGRAQKNGSTDSSDGSSK) is disordered. Over residues 119–131 (KNGSTDSSDGSSK) the composition is skewed to polar residues.

It localises to the cell membrane. This is an uncharacterized protein from Mycoplasma genitalium (strain ATCC 33530 / DSM 19775 / NCTC 10195 / G37) (Mycoplasmoides genitalium).